An 831-amino-acid polypeptide reads, in one-letter code: SID1 transmembrane family member 1 (831 aa).

The signal sequence occupies residues 1–19 (MLDCPRLALLCALPWLLRA). The Extracellular portion of the chain corresponds to 20–308 (AVPGHRAEPL…SVKGSVYVKS (289 aa)). 4 N-linked (GlcNAc...) asparagine glycosylation sites follow: asparagine 67, asparagine 83, asparagine 136, and asparagine 281. Residues 309-329 (SLFSVFVFLSFYLGCLLVVFV) form a helical membrane-spanning segment. At 330–441 (HHMRFQRKPV…DRRIVSKKYK (112 aa)) the chain is on the cytoplasmic side. The tract at residues 354-408 (VSHPITASTPEGSNYGAIDESSSSPGRQMSSSDGGQPCHSDTDSSVEESDFDTMP) is disordered. Low complexity predominate over residues 374-385 (SSSSPGRQMSSS). The segment covering 397–408 (SSVEESDFDTMP) has biased composition (acidic residues). The helical transmembrane segment at 442-462 (IYFWNIITIAVFYALPVMQLV) threads the bilayer. Over 463-493 (ITYQTVVNVTGNQDICYYNFLCAHPLGVLSA) the chain is Extracellular. N-linked (GlcNAc...) asparagine glycosylation occurs at asparagine 470. A helical membrane pass occupies residues 494-514 (FNNILSNLGHVLLGFLFLLIV). Residues 515-540 (LRRDLLHRRALEAKDIFAMEYGIPKH) lie on the Cytoplasmic side of the membrane. Residues 541–561 (FGLFYAMGIALMMEGVLSACY) form a helical membrane-spanning segment. Residues 562–571 (HVCPNYSNFQ) are Extracellular-facing. The N-linked (GlcNAc...) asparagine glycan is linked to asparagine 566. A helical transmembrane segment spans residues 572–589 (FDTSFMYMIAGLCMLKLY). The Cytoplasmic portion of the chain corresponds to 590–599 (QTRHPDINAS). Residues 600–620 (AYSAYASFAVVITLTVLGVVF) traverse the membrane as a helical segment. The Extracellular segment spans residues 621 to 625 (GKNDV). The helical transmembrane segment at 626–646 (WFWIIFSAIHVLASLALSTQI) threads the bilayer. The Cytoplasmic portion of the chain corresponds to 647–687 (YYMGRFKIDVSDTDLGIFRRAAMVFYTDCIQQCSRPLYMDR). The helical transmembrane segment at 688-708 (MVLLIVGNLVNWSFALFGLIY) threads the bilayer. At 709–714 (RPRDFA) the chain is on the extracellular side. The helical transmembrane segment at 715–735 (SYMLGIFICNLLLYLAFYIIM) threads the bilayer. Over 736–745 (KLRSSEKVLP) the chain is Cytoplasmic. A helical membrane pass occupies residues 746–766 (LPVFCIVATAVVWAAALYFFF). Residues 767–795 (QNLSSWEGTPAESREKNRECVLLGFFDDH) are Extracellular-facing. Asparagine 768 carries an N-linked (GlcNAc...) asparagine glycan. The helical transmembrane segment at 796-816 (DIWHFLSATALFFSFLVLLTL) threads the bilayer. At 817–831 (DDDLDVVRRDQIPVF) the chain is on the cytoplasmic side.

This sequence belongs to the SID1 family.

Its subcellular location is the membrane. In terms of biological role, in vitro binds long double-stranded RNA (dsRNA) (500 and 700 base pairs), but not dsRNA shorter than 300 bp. Not involved in RNA autophagy, a process in which RNA is directly imported into lysosomes in an ATP-dependent manner, and degraded. In Rattus norvegicus (Rat), this protein is SID1 transmembrane family member 1 (Sidt1).